Consider the following 101-residue polypeptide: UPF0060 membrane protein ACIAD1364 (101 aa).

3 helical membrane passes run 24 to 44 (WLWLPAIISLAVFVWLLTLHP), 50 to 70 (IYAAYGGIYIFTALMWLRFID), and 79 to 99 (IWGGTVVLLGAALIILQPQGL).

The protein belongs to the UPF0060 family.

It localises to the cell inner membrane. The polypeptide is UPF0060 membrane protein ACIAD1364 (Acinetobacter baylyi (strain ATCC 33305 / BD413 / ADP1)).